The following is a 190-amino-acid chain: Large ribosomal subunit protein bL17 (190 aa).

A disordered region spans residues lysine 128 to alanine 190. Positions alanine 143–threonine 154 are enriched in low complexity. The span at leucine 179–alanine 190 shows a compositional bias: acidic residues.

It belongs to the bacterial ribosomal protein bL17 family. As to quaternary structure, part of the 50S ribosomal subunit. Contacts protein L32.

This Salinispora tropica (strain ATCC BAA-916 / DSM 44818 / JCM 13857 / NBRC 105044 / CNB-440) protein is Large ribosomal subunit protein bL17.